The chain runs to 234 residues: UPF0502 protein BTH_II0990 (234 aa).

This sequence belongs to the UPF0502 family.

The polypeptide is UPF0502 protein BTH_II0990 (Burkholderia thailandensis (strain ATCC 700388 / DSM 13276 / CCUG 48851 / CIP 106301 / E264)).